Here is a 642-residue protein sequence, read N- to C-terminus: Threonine--tRNA ligase (642 aa).

A TGS domain is found at 1-61 (MPIITLPDGS…EEDASLEIIT (61 aa)). Residues 244-535 (DHRKIGKQLD…LIEEYAGFFP (292 aa)) are catalytic. Zn(2+) contacts are provided by Cys335, His386, and His512.

Belongs to the class-II aminoacyl-tRNA synthetase family. In terms of assembly, homodimer. Zn(2+) serves as cofactor.

It is found in the cytoplasm. It carries out the reaction tRNA(Thr) + L-threonine + ATP = L-threonyl-tRNA(Thr) + AMP + diphosphate + H(+). Functionally, catalyzes the attachment of threonine to tRNA(Thr) in a two-step reaction: L-threonine is first activated by ATP to form Thr-AMP and then transferred to the acceptor end of tRNA(Thr). Also edits incorrectly charged L-seryl-tRNA(Thr). The polypeptide is Threonine--tRNA ligase (Vibrio parahaemolyticus serotype O3:K6 (strain RIMD 2210633)).